Consider the following 84-residue polypeptide: Small ribosomal subunit protein bS16 (84 aa).

This sequence belongs to the bacterial ribosomal protein bS16 family.

The chain is Small ribosomal subunit protein bS16 from Endomicrobium trichonymphae.